The primary structure comprises 313 residues: Protein FixB (313 aa).

255 to 283 (LYLAVGISGQIQHMVGANASQTIFAINKD) serves as a coordination point for FAD.

This sequence belongs to the ETF alpha-subunit/FixB family. As to quaternary structure, heterodimer of FixA and FixB.

It functions in the pathway amine and polyamine metabolism; carnitine metabolism. Required for anaerobic carnitine reduction. May bring reductant to CaiA. This chain is Protein FixB, found in Escherichia coli O8 (strain IAI1).